The sequence spans 287 residues: Phosphatidylinositol transfer protein 5 (287 aa).

The interval Phe252 to Lys287 is disordered. The segment covering Asn254–Asn270 has biased composition (low complexity). The span at Thr271 to Lys287 shows a compositional bias: polar residues.

This sequence belongs to the PtdIns transfer protein family. PI transfer class IIA subfamily.

Phosphatidylinositol transfer proteins mediate the monomeric transport of lipids by shielding a lipid from the aqueous environment and binding the lipid in a hydrophobic cavity. The chain is Phosphatidylinositol transfer protein 5 (pitE) from Dictyostelium discoideum (Social amoeba).